Reading from the N-terminus, the 95-residue chain is Sec-independent protein translocase protein TatA (95 aa).

A helical membrane pass occupies residues 1 to 21 (MFGRLGAPEIILILVVIILLF). Residues 44 to 55 (AKAMKSEAKADD) are compositionally biased toward basic and acidic residues. Positions 44–95 (AKAMKSEAKADDAAPADPPNPEQSAAQRTIQAAPGDVTSSRPVTEPTDTTKR) are disordered.

Belongs to the TatA/E family. The Tat system comprises two distinct complexes: a TatABC complex, containing multiple copies of TatA, TatB and TatC subunits, and a separate TatA complex, containing only TatA subunits. Substrates initially bind to the TatABC complex, which probably triggers association of the separate TatA complex to form the active translocon.

The protein resides in the cell membrane. Functionally, part of the twin-arginine translocation (Tat) system that transports large folded proteins containing a characteristic twin-arginine motif in their signal peptide across membranes. TatA could form the protein-conducting channel of the Tat system. This chain is Sec-independent protein translocase protein TatA, found in Streptomyces coelicolor (strain ATCC BAA-471 / A3(2) / M145).